The primary structure comprises 529 residues: Bifunctional purine biosynthesis protein PurH (529 aa).

One can recognise an MGS-like domain in the interval 1-148; that stretch reads MQQRRPVRRA…KNHKDVAIVV (148 aa).

The protein belongs to the PurH family.

The catalysed reaction is (6R)-10-formyltetrahydrofolate + 5-amino-1-(5-phospho-beta-D-ribosyl)imidazole-4-carboxamide = 5-formamido-1-(5-phospho-D-ribosyl)imidazole-4-carboxamide + (6S)-5,6,7,8-tetrahydrofolate. The enzyme catalyses IMP + H2O = 5-formamido-1-(5-phospho-D-ribosyl)imidazole-4-carboxamide. Its pathway is purine metabolism; IMP biosynthesis via de novo pathway; 5-formamido-1-(5-phospho-D-ribosyl)imidazole-4-carboxamide from 5-amino-1-(5-phospho-D-ribosyl)imidazole-4-carboxamide (10-formyl THF route): step 1/1. The protein operates within purine metabolism; IMP biosynthesis via de novo pathway; IMP from 5-formamido-1-(5-phospho-D-ribosyl)imidazole-4-carboxamide: step 1/1. The polypeptide is Bifunctional purine biosynthesis protein PurH (Salmonella paratyphi C (strain RKS4594)).